A 156-amino-acid polypeptide reads, in one-letter code: S-ribosylhomocysteine lyase (156 aa).

Fe cation is bound by residues H54, H58, and C123.

This sequence belongs to the LuxS family. As to quaternary structure, homodimer. Fe cation serves as cofactor.

The catalysed reaction is S-(5-deoxy-D-ribos-5-yl)-L-homocysteine = (S)-4,5-dihydroxypentane-2,3-dione + L-homocysteine. In terms of biological role, involved in the synthesis of autoinducer 2 (AI-2) which is secreted by bacteria and is used to communicate both the cell density and the metabolic potential of the environment. The regulation of gene expression in response to changes in cell density is called quorum sensing. Catalyzes the transformation of S-ribosylhomocysteine (RHC) to homocysteine (HC) and 4,5-dihydroxy-2,3-pentadione (DPD). The polypeptide is S-ribosylhomocysteine lyase (Ligilactobacillus salivarius (strain UCC118) (Lactobacillus salivarius)).